Reading from the N-terminus, the 354-residue chain is S-adenosylmethionine:tRNA ribosyltransferase-isomerase (354 aa).

Belongs to the QueA family. As to quaternary structure, monomer.

Its subcellular location is the cytoplasm. It catalyses the reaction 7-aminomethyl-7-carbaguanosine(34) in tRNA + S-adenosyl-L-methionine = epoxyqueuosine(34) in tRNA + adenine + L-methionine + 2 H(+). It participates in tRNA modification; tRNA-queuosine biosynthesis. Its function is as follows. Transfers and isomerizes the ribose moiety from AdoMet to the 7-aminomethyl group of 7-deazaguanine (preQ1-tRNA) to give epoxyqueuosine (oQ-tRNA). The sequence is that of S-adenosylmethionine:tRNA ribosyltransferase-isomerase from Methylobacterium radiotolerans (strain ATCC 27329 / DSM 1819 / JCM 2831 / NBRC 15690 / NCIMB 10815 / 0-1).